Here is a 216-residue protein sequence, read N- to C-terminus: GTP cyclohydrolase 1 (216 aa).

Residues cysteine 109, histidine 112, and cysteine 180 each coordinate Zn(2+).

Belongs to the GTP cyclohydrolase I family. Homomer.

It carries out the reaction GTP + H2O = 7,8-dihydroneopterin 3'-triphosphate + formate + H(+). Its pathway is cofactor biosynthesis; 7,8-dihydroneopterin triphosphate biosynthesis; 7,8-dihydroneopterin triphosphate from GTP: step 1/1. This is GTP cyclohydrolase 1 from Tolumonas auensis (strain DSM 9187 / NBRC 110442 / TA 4).